Consider the following 131-residue polypeptide: Large ribosomal subunit protein bL17 (131 aa).

Belongs to the bacterial ribosomal protein bL17 family. Part of the 50S ribosomal subunit. Contacts protein L32.

The sequence is that of Large ribosomal subunit protein bL17 from Thermotoga neapolitana (strain ATCC 49049 / DSM 4359 / NBRC 107923 / NS-E).